We begin with the raw amino-acid sequence, 570 residues long: Urease subunit alpha (570 aa).

The 440-residue stretch at 131-570 (GGMDSHIHFI…LPMAQRYFLF (440 aa)) folds into the Urease domain. Ni(2+)-binding residues include His136, His138, and Lys219. N6-carboxylysine is present on Lys219. Residue His221 coordinates substrate. Ni(2+) is bound by residues His248 and His274. His322 acts as the Proton donor in catalysis. Residue Asp362 participates in Ni(2+) binding.

The protein belongs to the metallo-dependent hydrolases superfamily. Urease alpha subunit family. As to quaternary structure, heterotrimer of UreA (gamma), UreB (beta) and UreC (alpha) subunits. Three heterotrimers associate to form the active enzyme. It depends on Ni cation as a cofactor. Carboxylation allows a single lysine to coordinate two nickel ions.

Its subcellular location is the cytoplasm. It carries out the reaction urea + 2 H2O + H(+) = hydrogencarbonate + 2 NH4(+). Its pathway is nitrogen metabolism; urea degradation; CO(2) and NH(3) from urea (urease route): step 1/1. In Sinorhizobium fredii (strain NBRC 101917 / NGR234), this protein is Urease subunit alpha.